The chain runs to 856 residues: Dynamin-1 (856 aa).

The region spanning Asp-28–Pro-294 is the Dynamin-type G domain. Positions Gly-38–Ser-45 are G1 motif. GDP is bound by residues Ser-41, Gly-43, Lys-44, Ser-45, Ser-46, Arg-59, and Gly-60. The tract at residues Val-64–Arg-66 is G2 motif. Tyr-80 carries the phosphotyrosine modification. Residue Tyr-125 is modified to 3'-nitrotyrosine; alternate. Residue Tyr-125 is modified to Phosphotyrosine; alternate. Residues Asp-136–Gly-139 are G3 motif. The G4 motif stretch occupies residues Thr-205–Asp-208. Residues Lys-206, Asp-208, Asp-211, Asn-236, Arg-237, and Gln-239 each contribute to the GDP site. The segment at Val-235–Ser-238 is G5 motif. Ser-306 and Ser-347 each carry phosphoserine. A Phosphotyrosine modification is found at Tyr-354. Ser-512 bears the Phosphoserine mark. The PH domain occupies Leu-519–Val-625. The region spanning Val-659 to Val-750 is the GED domain. The tract at residues Val-750–Ser-856 is disordered. Over residues Leu-763–Pro-781 the composition is skewed to polar residues. A phosphoserine mark is found at Ser-774 and Ser-778. The residue at position 796 (Arg-796) is an Omega-N-methylarginine. Ser-822 is subject to Phosphoserine. Pro residues predominate over residues Pro-825–Pro-844.

Belongs to the TRAFAC class dynamin-like GTPase superfamily. Dynamin/Fzo/YdjA family. Homodimer; homodimerization is mediated by the dynamin-type G domain which promotes assembly-stimulated GTPase activity. Homo-tetramer formed from two dimers in the absence of lipid. Oligomerizes into a helical polymer that self-assembles around the vesicle membrane, when associated to the menbrane through lipid binding. Interacts (via C-terminal proline-rich domain (PRD)) with SNX9 (via SH3 domain); this interaction allows regulation of DNM1 self-assembly during late stages of endocytic vesicle formation and supports DNM1's early functions in accelerating clathrin-coated pits (CCPs) maturation in non neuronals cell. Interacts (via C-terminal proline-rich domain (PRD)) with MYO1E (via SH3 domain); this interaction regulates receptor-mediated endocytosis. Interacts with SNX33 (via SH3 domain); this interaction decreases DNM1-dependent endocytosis. Interacts with DIAPH1. Interacts with GRB2 (via SH3 domain); this interaction mediates disassembly of DNM1 polymers, therefore modulates self-assembly. Forms a complex with BIN1 (via SH3 domain) and SH3GL2 (via SH3 domain). Forms a complex with SH3GL2 (via SH3 domain) and AMPH (via SH3 domain). Forms a complex with SH3GL2 (via SH3 domain) and SYNJ1. Interacts with AMPH. Interacts (via C-terminal proline-rich domain (PRD)) with SYT1; this interaction facilitates vesicle fission during clathrin-mediated endocytosis (CME). Interacts (via C-terminal proline-rich domain (PRD)) with PLCG1 (via SH3 domain); this interaction stimulates the release of GDP from DNM1 and enhances DNM1-dependent endocytosis. Interacts with SNPH; this interaction inhibits the binding of DNM1 to AMPH and DNM1-receptor-mediated endocytosis. Interacts with CAV1. Interacts with SH3GLB1 (via SH3 domain). Interacts with PACSIN1 (via SH3 domain), PACSIN2 (via SH3 domain) and PACSIN3 (via SH3 domain). Interacts with UNC119; this interaction decreases DNM1's GTPase activity and affects DNM1's interaction with AMPH. Interacts with AMPH. Interacts (GTP-bound form) with DNAJC6; this interaction allows clathrin-coated vesicle (CCV) formation at the plasma membrane. In terms of processing, phosphorylation at Ser-774 by GSK3B/GSK3-beta leads to inactivation of receptor-mediated endocytosis in non-neuronal cells. Dephosphorylation at Ser-774, through the EGFR downstream signaling, leads to activation and regulates early stages of clathrin-mediated endocytosis (CME).

The protein resides in the cell membrane. The protein localises to the membrane. It is found in the clathrin-coated pit. It localises to the cytoplasmic vesicle. Its subcellular location is the presynapse. The protein resides in the secretory vesicle. The protein localises to the chromaffin granule. The enzyme catalyses GTP + H2O = GDP + phosphate + H(+). Its function is as follows. Catalyzes the hydrolysis of GTP and utilizes this energy to mediate vesicle scission and participates in many forms of endocytosis, such as clathrin-mediated endocytosis or synaptic vesicle endocytosis as well as rapid endocytosis (RE). Associates to the membrane, through lipid binding, and self-assembles into rings and stacks of interconnected rings through oligomerization to form a helical polymer around the vesicle membrane leading to constriction of invaginated coated pits around their necks. Self-assembly of the helical polymer induces membrane tubules narrowing until the polymer reaches a length sufficient to trigger GTP hydrolysis. Depending on the curvature imposed on the tubules, membrane detachment from the helical polymer upon GTP hydrolysis can cause spontaneous hemifission followed by complete fission. May play a role in regulating early stages of clathrin-mediated endocytosis in non-neuronal cells through its activation by dephosphorylation via the signaling downstream of EGFR. Controls vesicle size at a step before fission, during formation of membrane pits, at hippocampal synapses. Controls plastic adaptation of the synaptic vesicle recycling machinery to high levels of activity. Mediates rapid endocytosis (RE), a Ca(2+)-dependent and clathrin- and K(+)-independent process in chromaffin cells. Microtubule-associated force-producing protein involved in producing microtubule bundles and able to bind and hydrolyze GTP. Through its interaction with DNAJC6, acts during the early steps of clathrin-coated vesicle (CCV) formation. The protein is Dynamin-1 of Bos taurus (Bovine).